We begin with the raw amino-acid sequence, 146 residues long: Putative pre-16S rRNA nuclease (146 aa).

Belongs to the YqgF nuclease family.

The protein resides in the cytoplasm. Could be a nuclease involved in processing of the 5'-end of pre-16S rRNA. In Pediococcus pentosaceus (strain ATCC 25745 / CCUG 21536 / LMG 10740 / 183-1w), this protein is Putative pre-16S rRNA nuclease.